Consider the following 327-residue polypeptide: Autoinducer 2 import system permease protein LsrD (327 aa).

9 helical membrane-spanning segments follow: residues 3–23 (LNWE…FGAI), 41–61 (ICIG…GIDI), 63–83 (LGST…FGLP), 86–106 (LAVP…AALI), 114–134 (LVIT…LSGL), 158–178 (VLGL…FWLI), 211–231 (ALYG…VSYF), 257–277 (IYGG…VGYL), and 283–303 (MVGI…VVVV).

It belongs to the binding-protein-dependent transport system permease family. AraH/RbsC subfamily. The complex is composed of two ATP-binding proteins (LsrA), two transmembrane proteins (LsrC and LsrD) and a solute-binding protein (LsrB).

The protein resides in the cell inner membrane. Its function is as follows. Part of the ABC transporter complex LsrABCD involved in autoinducer 2 (AI-2) import. Probably responsible for the translocation of the substrate across the membrane. The polypeptide is Autoinducer 2 import system permease protein LsrD (lsrD) (Enterobacter sp. (strain 638)).